The chain runs to 782 residues: Coiled-coil alpha-helical rod protein 1 (782 aa).

Basic and acidic residues-rich tracts occupy residues 62-74 (ERDVSSDRQEPGR) and 208-218 (ETRRAGEAKEL). 2 disordered regions span residues 62–82 (ERDVSSDRQEPGRRGRSWGLE) and 177–218 (EQLS…AKEL). Coiled-coil stretches lie at residues 111 to 303 (LRET…SLTH), 344 to 437 (LMVQ…NAVS), and 498 to 691 (VTDV…QQEG).

As to expression, found in all tissues tested, abundantly expressed in heart, liver, skeletal muscle, kidney and pancreas, and to a lesser extent in lung and placenta. Overexpressed in keratinocytes of psoriatic lesions.

The protein localises to the cytoplasm. Its subcellular location is the nucleus. Functionally, may be a regulator of keratinocyte proliferation or differentiation. This chain is Coiled-coil alpha-helical rod protein 1 (CCHCR1), found in Homo sapiens (Human).